The chain runs to 509 residues: Cardiolipin synthase 1 (509 aa).

3 helical membrane passes run Pro4 to Thr24, Tyr30 to Ile50, and Leu59 to Phe79. PLD phosphodiesterase domains follow at residues Val238 to Tyr265 and Lys422 to Ser449. Active-site residues include His243, Lys245, Asp250, His427, Lys429, and Asp434.

This sequence belongs to the phospholipase D family. Cardiolipin synthase subfamily.

It localises to the cell membrane. The enzyme catalyses 2 a 1,2-diacyl-sn-glycero-3-phospho-(1'-sn-glycerol) = a cardiolipin + glycerol. In terms of biological role, catalyzes the reversible phosphatidyl group transfer from one phosphatidylglycerol molecule to another to form cardiolipin (CL) (diphosphatidylglycerol) and glycerol. In Bacillus anthracis, this protein is Cardiolipin synthase 1 (cls1).